We begin with the raw amino-acid sequence, 192 residues long: MVSMFWLLATFAYLLGSLSFAILLSRLSGRPDPRASGSGNAGATNMLRLAGKKLAILTLLGDLCKGLLPILIASAWNLNIAQQGWIGVCAVLGHLFPVYFRFRGGKGVATAAGVLLGLYPPAAALAIAAWLLTLYLTRTSSLAALIATPLTLPLLAWQEPHALLPMSVLTLLIVWRHRGNLRDLLAGRERHF.

The next 5 helical transmembrane spans lie at 4–24 (MFWL…AILL), 54–74 (LAIL…LIAS), 80–100 (IAQQ…PVYF), 112–132 (AGVL…AWLL), and 154–174 (LLAW…LLIV).

This sequence belongs to the PlsY family. As to quaternary structure, probably interacts with PlsX.

The protein resides in the cell inner membrane. It carries out the reaction an acyl phosphate + sn-glycerol 3-phosphate = a 1-acyl-sn-glycero-3-phosphate + phosphate. It participates in lipid metabolism; phospholipid metabolism. Functionally, catalyzes the transfer of an acyl group from acyl-phosphate (acyl-PO(4)) to glycerol-3-phosphate (G3P) to form lysophosphatidic acid (LPA). This enzyme utilizes acyl-phosphate as fatty acyl donor, but not acyl-CoA or acyl-ACP. The sequence is that of Glycerol-3-phosphate acyltransferase from Pseudomonas savastanoi pv. phaseolicola (strain 1448A / Race 6) (Pseudomonas syringae pv. phaseolicola (strain 1448A / Race 6)).